Here is a 255-residue protein sequence, read N- to C-terminus: Lipoprotein-releasing system ATP-binding protein LolD 2 (255 aa).

In terms of domain architecture, ABC transporter spans 9–254 (LEARGIRKSY…SDSAKLETVA (246 aa)). 45-52 (GRSGSGKS) is a binding site for ATP.

Belongs to the ABC transporter superfamily. Lipoprotein translocase (TC 3.A.1.125) family. In terms of assembly, the complex is composed of two ATP-binding proteins (LolD) and two transmembrane proteins (LolC and LolE).

The protein localises to the cell inner membrane. Part of the ABC transporter complex LolCDE involved in the translocation of mature outer membrane-directed lipoproteins, from the inner membrane to the periplasmic chaperone, LolA. Responsible for the formation of the LolA-lipoprotein complex in an ATP-dependent manner. In Rhodopirellula baltica (strain DSM 10527 / NCIMB 13988 / SH1), this protein is Lipoprotein-releasing system ATP-binding protein LolD 2.